The sequence spans 117 residues: Probable non-functional immunoglobulin heavy variable 1-38-4 (117 aa).

The first 19 residues, 1–19 (MDWNWRILFLVVATTGAHS), serve as a signal peptide directing secretion. The interval 20–44 (QVQLVQSWAEVRKSGASVKVSCSFS) is framework-1. Positions 20–117 (QVQLVQSWAE…EDMAVYYYAR (98 aa)) constitute an Ig-like domain. The segment at 45–52 (GFTITSYG) is complementarity-determining-1. Residues 53 to 69 (IHWVQQSPGQGLEWMGW) are framework-2. Positions 70-77 (INPGNGSP) are complementarity-determining-2. An N-linked (GlcNAc...) asparagine glycan is attached at asparagine 74. The tract at residues 78 to 115 (SYAKKFQGRFTMTRDMSTTTAYTDLSSLTSEDMAVYYY) is framework-3. Residues 116 to 117 (AR) are complementarity-determining-3.

Most probably, the immunoglobulin is not assembled due to incorrect folding of heavy chain. Immunoglobulins are composed of two identical heavy chains and two identical light chains; disulfide-linked.

It is found in the secreted. Its subcellular location is the cell membrane. In terms of biological role, probable non-functional open reading frame (ORF) of V region of the variable domain of immunoglobulin heavy chains. Non-functional ORF generally cannot participate in the synthesis of a productive immunoglobulin chain due to altered V-(D)-J or switch recombination and/or splicing site (at mRNA level) and/or conserved amino acid change (protein level). Immunoglobulins, also known as antibodies, are membrane-bound or secreted glycoproteins produced by B lymphocytes. In the recognition phase of humoral immunity, the membrane-bound immunoglobulins serve as receptors which, upon binding of a specific antigen, trigger the clonal expansion and differentiation of B lymphocytes into immunoglobulins-secreting plasma cells. Secreted immunoglobulins mediate the effector phase of humoral immunity, which results in the elimination of bound antigens. The antigen binding site is formed by the variable domain of one heavy chain, together with that of its associated light chain. Thus, each immunoglobulin has two antigen binding sites with remarkable affinity for a particular antigen. The variable domains are assembled by a process called V-(D)-J rearrangement and can then be subjected to somatic hypermutations which, after exposure to antigen and selection, allow affinity maturation for a particular antigen. The protein is Probable non-functional immunoglobulin heavy variable 1-38-4 of Homo sapiens (Human).